The sequence spans 461 residues: Cysteine--tRNA ligase (461 aa).

C28 is a Zn(2+) binding site. A 'HIGH' region motif is present at residues 30 to 40 (ITVYDLCHIGH). Residues C209, H234, and E238 each coordinate Zn(2+). Residues 266-270 (KMSKS) carry the 'KMSKS' region motif. ATP is bound at residue K269.

The protein belongs to the class-I aminoacyl-tRNA synthetase family. As to quaternary structure, monomer. It depends on Zn(2+) as a cofactor.

It localises to the cytoplasm. It carries out the reaction tRNA(Cys) + L-cysteine + ATP = L-cysteinyl-tRNA(Cys) + AMP + diphosphate. This is Cysteine--tRNA ligase from Escherichia coli (strain 55989 / EAEC).